Here is a 409-residue protein sequence, read N- to C-terminus: Na(+)/H(+) antiporter NhaA (409 aa).

A run of 11 helical transmembrane segments spans residues 13–33 (SGGI…NTFL), 58–78 (LILW…GLEL), 93–113 (IALP…IFYL), 120–140 (FALG…LGIL), 153–173 (IFLM…IALF), 176–196 (SELS…LFAL), 216–236 (VAVL…AFFI), 256–276 (LHGW…AGIS), 279–299 (GVGL…GLFV), 326–346 (FIQL…SLFI), and 363–383 (LAIL…LKFS).

Belongs to the NhaA Na(+)/H(+) (TC 2.A.33) antiporter family.

The protein localises to the cell inner membrane. It carries out the reaction Na(+)(in) + 2 H(+)(out) = Na(+)(out) + 2 H(+)(in). Its function is as follows. Na(+)/H(+) antiporter that extrudes sodium in exchange for external protons. The polypeptide is Na(+)/H(+) antiporter NhaA (Campylobacter concisus (strain 13826)).